Reading from the N-terminus, the 195-residue chain is MVSSCCGSVCSDQSCGQGLGQESCCRPSCCQTTCCRTTCCRPSCCISSCCRPSCCISSCCKPSCCRTTCCRPSCCISSCCRPSCCISSCCKPSCCRTTCCRPSCCISSCCRPSCCISSCCKPSCCQTTCCRPSCCISSCYRPQCCQPSCCRPACCISSCCHPSCCVSSCRCPFSCPTTCCRTTCFHPICCGSSCC.

28 tandem repeats follow at residues 34-38 (CCRTT), 39-43 (CCRPS), 44-48 (CCISS), 49-53 (CCRPS), 54-58 (CCISS), 59-63 (CCKPS), 64-68 (CCRTT), 69-73 (CCRPS), 74-78 (CCISS), 79-83 (CCRPS), 84-88 (CCISS), 89-93 (CCKPS), 94-98 (CCRTT), 99-103 (CCRPS), 104-108 (CCISS), 109-113 (CCRPS), 114-118 (CCISS), 119-123 (CCKPS), 124-128 (CCQTT), 129-133 (CCRPS), 134-138 (CCISS), 144-148 (CCQPS), 149-153 (CCRPA), 154-158 (CCISS), 159-163 (CCHPS), 164-168 (CCVSS), 179-183 (CCRTT), and 189-193 (CCGSS). The interval 34–193 (CCRTTCCRPS…CFHPICCGSS (160 aa)) is 29 X 5 AA repeats of C-C-[GIKRQVH]-[SPT]-[STA].

It belongs to the KRTAP type 4 family. As to quaternary structure, interacts with hair keratins. In terms of tissue distribution, expressed specifically in the middle/uper portions of the hair cortex. Not detected in the hair matrix or cuticle.

In the hair cortex, hair keratin intermediate filaments are embedded in an interfilamentous matrix, consisting of hair keratin-associated proteins (KRTAP), which are essential for the formation of a rigid and resistant hair shaft through their extensive disulfide bond cross-linking with abundant cysteine residues of hair keratins. The matrix proteins include the high-sulfur and high-glycine-tyrosine keratins. In Homo sapiens (Human), this protein is Keratin-associated protein 4-3 (KRTAP4-3).